A 229-amino-acid chain; its full sequence is Large ribosomal subunit protein uL1c (229 aa).

It belongs to the universal ribosomal protein uL1 family. In terms of assembly, part of the 50S ribosomal subunit.

The protein localises to the plastid. Its subcellular location is the chloroplast. Its function is as follows. Binds directly to 23S rRNA. Might be involved in E site tRNA release (Potential). The chain is Large ribosomal subunit protein uL1c (rpl1) from Pyropia yezoensis (Susabi-nori).